The sequence spans 554 residues: Hydroxylamine reductase (554 aa).

[2Fe-2S] cluster is bound by residues C3, C6, C18, and C25. H252, E276, C320, C408, C436, C461, E495, and K497 together coordinate hybrid [4Fe-2O-2S] cluster. The residue at position 408 (C408) is a Cysteine persulfide.

This sequence belongs to the HCP family. It depends on [2Fe-2S] cluster as a cofactor. The cofactor is hybrid [4Fe-2O-2S] cluster.

The protein localises to the cytoplasm. The catalysed reaction is A + NH4(+) + H2O = hydroxylamine + AH2 + H(+). Catalyzes the reduction of hydroxylamine to form NH(3) and H(2)O. The sequence is that of Hydroxylamine reductase from Photobacterium profundum (strain SS9).